The sequence spans 619 residues: Adagio protein 3 (619 aa).

One can recognise a PAS domain in the interval 44-123; it reads VGMFYYPMTP…SEIRRCLEEG (80 aa). C91 carries the post-translational modification S-4a-FMN cysteine. The PAC domain maps to 127 to 168; sequence QGELLNFRKDGTPLVNRLRLAPIRDDDGTITHVIGIQVFSET. The region spanning 211–257 is the F-box domain; the sequence is ILQLSDEVLAHNILSRLTPRDVASIGSACRRLRQLTKNESVRKMVCQ. 5 Kelch repeats span residues 304–354, 357–404, 409–457, 462–513, and 523–571; these read SRCN…TSSP, RWGH…AGGT, RSWH…PTSW, RLGH…ECSA, and RLDH…NVPG.

Belongs to the ADAGIO family. In terms of assembly, interacts with ADO1 (via Kelch repeats), ADO2 (via Kelch repeats), SKP1A/ASK1, SKP1B/ASK2, ASK3, SKP1K/ASK11, ASK12, ASK13 and SKP1N/ASK14. Interacts (via Kelch repeats) with CDF1, CDF2 and CDF3. Interacts (via N-terminus) with CO and GI (via N-terminus) in a blue-light-dependent manner. In terms of processing, FMN binds covalently to cysteine after exposure to blue light and is reversed in the dark. As to expression, highly expressed in stomata and leaves and to a lower extent in seeds, roots, rosettes, stems and siliques. Also present in sepals and anther filaments.

It is found in the nucleus. Its subcellular location is the cytoplasm. Its pathway is protein modification; protein ubiquitination. Component of an E3 ubiquitin ligase complex that plays a central role in blue light-dependent circadian cycles. Acts as a blue light photoreceptor, due to the presence of FMN, that mediates light-regulated protein degradation of critical clock components by targeting them to the proteasome complex. The SCF(ADO3) E3 ubiquitin ligase complex is involved in the regulation of circadian clock-dependent processes including transition to flowering time, hypocotyl elongation, cotyledons and leaf movement rhythms. Forms a complex with 'GIGANTEA' (GI) to regulate 'CONSTANS' (CO) expression. Promotes CO expression during the light period of long days by decreasing the stability of CDF1 and CDF2 and by interacting directly with the CO protein and stabilizing it. ADO3 function is mainly GI dependent. Does not act as a regulator of CDF1 transcription. The interactions of ADO1/ZTL and ADO2 with ADO3 prevent its interaction with CDF1. This Arabidopsis thaliana (Mouse-ear cress) protein is Adagio protein 3 (ADO3).